The following is a 283-amino-acid chain: MSLLATLGLELDRALLPASGLGWLVDYGKLPLAPAPLGPYEVLGGALEGGLPGGGEPLAGDGFSDWMTERVDFTALLPLEAPLPPGTLPPPSPAPPDLEAMASLLKKELEQMEDFFLDAPLLPPPSPPPPPPPAAAPSLPLPLPLPTFDLPQPPTLDTLDLLAVYCRSEAGPGDSGLSTLPVPQQPPPLAPLPSPARPAPYPSPASTRGDRKQKKRDQNKSAALRYRQRKRAEGEALEGECQGLEARNRELRERAESVEREIQYVKDLLIEVYKARSQRTRST.

Residues methionine 1–leucine 21 are required for protein stabilization induced by IL1B. Lysine 29 carries the N6-acetyllysine; by EP300 modification. 2 disordered regions span residues aspartate 118–proline 154 and serine 168–cysteine 241. The interaction with PTP4A1 stretch occupies residues alanine 119 to glutamine 218. 2 stretches are compositionally biased toward pro residues: residues leucine 121–leucine 145 and proline 183–serine 203. Residues glycine 209–valine 272 form the bZIP domain. A basic motif region spans residues arginine 211–arginine 231. Residues leucine 237 to leucine 251 form a leucine-zipper region. Serine 257 carries the post-translational modification Phosphoserine.

It belongs to the bZIP family. As to quaternary structure, binds DNA as a dimer. Interacts with PTP4A1/PRL-1. Interacts with CCND3, but not with CCND1 or CCND2. Interacts with HSPA1A or HSPA1B; the interaction protects ATF5 from degradation via proteasome-dependent and caspase-dependent processes. Interacts (via C-terminal region) with NPM1 (via C-terminal region); the interaction leads to loss of association between HSPA1A or HSPA1B and ATF5 and promotes ATF5 degradation via proteasome-dependent and caspase-dependent processes. Interacts with NLK; the interaction stabilizes ATF5 at the protein level in a kinase-independent manner. Interacts with alpha-tubulin, gamma-tubulin members TUBGCP2 and TUBGCP4, PCNT; the ATF5:PCNT:polyglutamylated tubulin (PGT) tripartite unites the mother centriole and the pericentriolar material (PCM) in the centrosome. Interacts with CEBPB and EP300; EP300 is required for ATF5 and CEBPB interaction and DNA binding. In terms of processing, acetylated at Lys-29 by EP300, the acetylation enhances the interaction with CEBPB, DNA-binding and transactivation activity. Post-translationally, ubiquitinated by CDC34 and UBE2B in order to be degraded by the proteasome. Cisplatin inhibits ubiquitination and proteasome-mediated degradation by inhibiting the interaction with CDC34. Ubiquitination and degradation by the proteasome are inhibited by NLK in a kinase-independent manner. Phosphorylated by NLK, probably at Ser-92 and Ser-126. As to expression, highly expressed in liver and at lower levels in heart, brain, lung, kidney, adipose tissue, and skeletal muscle. Expressed in some immature and in all mature olfactory sensory neurons (at protein level).

Its subcellular location is the cytoplasm. It is found in the nucleus. The protein resides in the cytoskeleton. The protein localises to the microtubule organizing center. It localises to the centrosome. Its function is as follows. Transcription factor that either stimulates or represses gene transcription through binding of different DNA regulatory elements such as cAMP response element (CRE) (consensus: 5'-GTGACGT[AC][AG]-3'), ATF5-specific response element (ARE) (consensus: 5'-C[CT]TCT[CT]CCTT[AT]-3') but also the amino acid response element (AARE), present in many viral and cellular promoters. Critically involved, often in a cell type-dependent manner, in cell survival, proliferation, and differentiation. Its transcriptional activity is enhanced by CCND3 and slightly inhibited by CDK4. Important regulator of the cerebral cortex formation, functions in cerebral cortical neuroprogenitor cells to maintain proliferation and to block differentiation into neurons. Must be down-regulated in order for such cells to exit the cycle and differentiate. Participates in the pathways by which SHH promotes cerebellar granule neuron progenitor cells proliferation. Critical for survival of mature olfactory sensory neurons (OSN), directs expression of OSN-specific genes. May be involved in osteogenic differentiation. Promotes cell proliferation and survival by inducing the expression of EGR1 sinergistically with ELK1. Once acetylated by EP300, binds to ARE sequences on target genes promoters, such as BCL2 and EGR1. Plays an anti-apoptotic role through the transcriptional regulation of BCL2, this function seems to be cell type-dependent. Cooperates with NR1I3/CAR in the transcriptional activation of CYP2B6 in liver. In hepatic cells, represses CRE-dependent transcription and inhibits proliferation by blocking at G2/M phase. May act as a negative regulator of IL1B transduction pathway in liver. Upon IL1B stimulus, cooperates with NLK to activate the transactivation activity of C/EBP subfamily members. Besides its function of transcription factor, acts as a cofactor of CEBPB to activate CEBPA and promote adipocyte differentiation. Regulates centrosome dynamics in a cell-cycle- and centriole-age-dependent manner. Forms 9-foci symmetrical ring scaffold around the mother centriole to control centrosome function and the interaction between centrioles and pericentriolar material. The protein is Cyclic AMP-dependent transcription factor ATF-5 (Atf5) of Mus musculus (Mouse).